Reading from the N-terminus, the 501-residue chain is Glycerol kinase (501 aa).

Thr-12 is a binding site for ADP. Residues Thr-12, Thr-13, and Ser-14 each coordinate ATP. Thr-12 lines the sn-glycerol 3-phosphate pocket. Residue Arg-16 coordinates ADP. Positions 82, 83, 135, and 244 each coordinate sn-glycerol 3-phosphate. 5 residues coordinate glycerol: Arg-82, Glu-83, Tyr-135, Asp-244, and Gln-245. Positions 266, 309, 409, and 413 each coordinate ADP. Residues Thr-266, Gly-309, and Gly-409 each contribute to the ATP site.

The protein belongs to the FGGY kinase family.

It carries out the reaction glycerol + ATP = sn-glycerol 3-phosphate + ADP + H(+). It participates in polyol metabolism; glycerol degradation via glycerol kinase pathway; sn-glycerol 3-phosphate from glycerol: step 1/1. With respect to regulation, inhibited by fructose 1,6-bisphosphate (FBP). Key enzyme in the regulation of glycerol uptake and metabolism. Catalyzes the phosphorylation of glycerol to yield sn-glycerol 3-phosphate. This chain is Glycerol kinase, found in Coxiella burnetii (strain Dugway 5J108-111).